The following is a 360-amino-acid chain: ELAV-like protein 2 (360 aa).

The tract at residues 1–36 (METQLSNGPTCNNTANGPTTVNNNCSSPVDSGNTED) is disordered. 2 consecutive RRM domains span residues 39–117 (TNLI…YARP) and 125–205 (ANLY…FANN). At Ser221 the chain carries Phosphoserine. The RRM 3 domain occupies 277–355 (WCIFVYNLAP…RVLQVSFKTN (79 aa)).

This sequence belongs to the RRM elav family. Interacts with IGF2BP1. Interacts with MAP1B light chain LC1. In terms of tissue distribution, brain; neural-specific. Expressed in the hippocampus.

In terms of biological role, RNA-binding protein that binds to the 3' untranslated region (3'UTR) of target mRNAs. Seems to recognize a GAAA motif. Can bind to its own 3'UTR, the FOS 3'UTR and the ID 3'UTR. This Mus musculus (Mouse) protein is ELAV-like protein 2 (Elavl2).